Consider the following 364-residue polypeptide: Alanine racemase (364 aa).

Lys-34 (proton acceptor; specific for D-alanine) is an active-site residue. Lys-34 bears the N6-(pyridoxal phosphate)lysine mark. Arg-129 is a substrate binding site. Residue Tyr-259 is the Proton acceptor; specific for L-alanine of the active site. Position 307 (Met-307) interacts with substrate.

It belongs to the alanine racemase family. Pyridoxal 5'-phosphate serves as cofactor.

The catalysed reaction is L-alanine = D-alanine. It functions in the pathway amino-acid biosynthesis; D-alanine biosynthesis; D-alanine from L-alanine: step 1/1. Functionally, catalyzes the interconversion of L-alanine and D-alanine. May also act on other amino acids. This chain is Alanine racemase (alr), found in Coxiella burnetii (strain RSA 493 / Nine Mile phase I).